A 251-amino-acid chain; its full sequence is MNLNSIPAFDDNYIWVLNDEAGRCLIVDPGDAEPVLNAIAANNWQPEAIFLTHHHHDHVGGVKELVKKFPQIVVYGPQETQDKGTTQVVKDGETAFVLGHEFSVIATPGHTLGHICYFSKPYLFCGDTLFSGGCGRLFEGTASQMYQSLKKLSALPDDTLVCCAHEYTLSNMKFALSILPHDLSINDYYRKVKELRAKNQITLPVILKNERQINVFLRTEDIDLINVINEETLLQQPEERFAWLRSKKDRF.

Positions 53, 55, 57, 58, 110, 127, and 165 each coordinate Zn(2+).

It belongs to the metallo-beta-lactamase superfamily. Glyoxalase II family. Monomer. Zn(2+) serves as cofactor.

The enzyme catalyses an S-(2-hydroxyacyl)glutathione + H2O = a 2-hydroxy carboxylate + glutathione + H(+). Its pathway is secondary metabolite metabolism; methylglyoxal degradation; (R)-lactate from methylglyoxal: step 2/2. Functionally, thiolesterase that catalyzes the hydrolysis of S-D-lactoyl-glutathione to form glutathione and D-lactic acid. The sequence is that of Hydroxyacylglutathione hydrolase from Escherichia coli (strain SMS-3-5 / SECEC).